Consider the following 262-residue polypeptide: Indole-3-glycerol phosphate synthase (262 aa).

Belongs to the TrpC family.

It catalyses the reaction 1-(2-carboxyphenylamino)-1-deoxy-D-ribulose 5-phosphate + H(+) = (1S,2R)-1-C-(indol-3-yl)glycerol 3-phosphate + CO2 + H2O. Its pathway is amino-acid biosynthesis; L-tryptophan biosynthesis; L-tryptophan from chorismate: step 4/5. In Bordetella bronchiseptica (strain ATCC BAA-588 / NCTC 13252 / RB50) (Alcaligenes bronchisepticus), this protein is Indole-3-glycerol phosphate synthase.